A 385-amino-acid polypeptide reads, in one-letter code: MKYSTLVSIAAFISTSLAATVPDEHYSTLSPSAKIPSGASTDFSGTFGIQVVTVESASALSTDTATSTLTRNDNKKEATPVAQITDGQVQHQTTGGVSAIKQISDGQVQHQTNAAQPIAQISDGQIQHQTTAKATATPVQQINDGQIQHQTTVQPVAQISDGQIQHQTAKATATPVQQIGDGQIQHQTTVQPVAQISDGQIQHQTVKASATPVQQIGDGQIQHQTTAAAATTASAVKQINDGQIQHQTTTAENVAKAQSDGQAIATGSPSSNSTLSDDDDLSSTIPKACSSANNLEMTLHDSVLKDTHERWGAIVANHQFQFDGPIPQAGTIYSAGWSIKDGYLYLGDSNIFYQCLSGDFYNLYDENVAKQCSAVKLSVIEFVNC.

Positions Met-1 to Ala-18 are cleaved as a signal peptide. PIR1/2/3 repeat units lie at residues Ala-78 to Gly-96, Val-97 to Ala-115, Gln-116 to Lys-133, Ala-136 to Val-153, Gln-154 to Ala-171, Ala-173 to Val-190, Gln-191 to Ala-208, Ala-210 to Ala-228, and Ala-233 to Ala-251. The tract at residues Ala-257 to Ser-282 is disordered. Residue Asn-272 is glycosylated (N-linked (GlcNAc...) asparagine).

Belongs to the PIR protein family. Post-translationally, covalently linked to beta-1,3-glucan of the inner cell wall layer via an alkali-sensitive ester linkage between the gamma-carboxyl group of glutamic acids, arising from specific glutamines within the PIR1/2/3 repeats, and hydroxyl groups of glucoses of beta-1,3-glucan chains. Highly O-glycosylated by PMT1 and contains one N-mannosylated chain.

It localises to the secreted. Its subcellular location is the cell wall. Its function is as follows. Component of the outer cell wall layer required for stability of the cell wall and specifically for cell wall rigidity. The sequence is that of Cell wall mannoprotein PIR1 (PIR1) from Candida albicans (strain SC5314 / ATCC MYA-2876) (Yeast).